The chain runs to 603 residues: DNA-directed RNA polymerase subunit beta' N-terminal section (603 aa).

Zn(2+) contacts are provided by cysteine 283, cysteine 285, cysteine 329, and cysteine 332.

It belongs to the RNA polymerase beta' chain family. RpoC1 subfamily. As to quaternary structure, in plastids the minimal PEP RNA polymerase catalytic core is composed of four subunits: alpha, beta, beta', and beta''. When a (nuclear-encoded) sigma factor is associated with the core the holoenzyme is formed, which can initiate transcription. It depends on Zn(2+) as a cofactor.

Its subcellular location is the plastid. The protein resides in the chloroplast. The enzyme catalyses RNA(n) + a ribonucleoside 5'-triphosphate = RNA(n+1) + diphosphate. Functionally, DNA-dependent RNA polymerase catalyzes the transcription of DNA into RNA using the four ribonucleoside triphosphates as substrates. This Chlamydomonas reinhardtii (Chlamydomonas smithii) protein is DNA-directed RNA polymerase subunit beta' N-terminal section (rpoC1A).